We begin with the raw amino-acid sequence, 149 residues long: D-aminoacyl-tRNA deacylase (149 aa).

Positions 137–138 (GP) match the Gly-cisPro motif, important for rejection of L-amino acids motif.

Belongs to the DTD family. Homodimer.

It is found in the cytoplasm. The enzyme catalyses glycyl-tRNA(Ala) + H2O = tRNA(Ala) + glycine + H(+). It carries out the reaction a D-aminoacyl-tRNA + H2O = a tRNA + a D-alpha-amino acid + H(+). Its function is as follows. An aminoacyl-tRNA editing enzyme that deacylates mischarged D-aminoacyl-tRNAs. Also deacylates mischarged glycyl-tRNA(Ala), protecting cells against glycine mischarging by AlaRS. Acts via tRNA-based rather than protein-based catalysis; rejects L-amino acids rather than detecting D-amino acids in the active site. By recycling D-aminoacyl-tRNA to D-amino acids and free tRNA molecules, this enzyme counteracts the toxicity associated with the formation of D-aminoacyl-tRNA entities in vivo and helps enforce protein L-homochirality. This Clostridium botulinum (strain Alaska E43 / Type E3) protein is D-aminoacyl-tRNA deacylase.